The sequence spans 60 residues: Cytotoxin 5 (60 aa).

Cystine bridges form between Cys3/Cys21, Cys14/Cys38, Cys42/Cys53, and Cys54/Cys59.

Belongs to the three-finger toxin family. Short-chain subfamily. Type IA cytotoxin sub-subfamily. In terms of assembly, monomer in solution; Homodimer and oligomer in the presence of negatively charged lipids forming a pore with a size ranging between 20 and 30 Angstroms. In terms of tissue distribution, expressed by the venom gland.

Its subcellular location is the secreted. It is found in the target cell membrane. In terms of biological role, basic protein that binds to cell membrane and depolarizes cardiomyocytes. It also possesses lytic activity on many other cells, including red blood cells. Interaction with sulfatides in the cell membrane induces pore formation and cell internalization and is responsible for cytotoxicity in cardiomyocytes. It targets the mitochondrial membrane and induces mitochondrial swelling and fragmentation. Inhibits protein kinases C. It binds to the integrin alpha-V/beta-3 with a moderate affinity. Is cardiotoxic and cytocidal to Yoshida sarcoma cells. In Naja atra (Chinese cobra), this protein is Cytotoxin 5.